We begin with the raw amino-acid sequence, 348 residues long: Lipoyl synthase, mitochondrial (348 aa).

Positions 105, 110, 116, 136, 140, and 143 each coordinate [4Fe-4S] cluster. A Radical SAM core domain is found at 121 to 341 (ETGTATATIM…RTXXLVSYVL (221 aa)).

Belongs to the radical SAM superfamily. Lipoyl synthase family. [4Fe-4S] cluster is required as a cofactor.

It is found in the mitochondrion. It catalyses the reaction [[Fe-S] cluster scaffold protein carrying a second [4Fe-4S](2+) cluster] + N(6)-octanoyl-L-lysyl-[protein] + 2 oxidized [2Fe-2S]-[ferredoxin] + 2 S-adenosyl-L-methionine + 4 H(+) = [[Fe-S] cluster scaffold protein] + N(6)-[(R)-dihydrolipoyl]-L-lysyl-[protein] + 4 Fe(3+) + 2 hydrogen sulfide + 2 5'-deoxyadenosine + 2 L-methionine + 2 reduced [2Fe-2S]-[ferredoxin]. It participates in protein modification; protein lipoylation via endogenous pathway; protein N(6)-(lipoyl)lysine from octanoyl-[acyl-carrier-protein]: step 2/2. In terms of biological role, catalyzes the radical-mediated insertion of two sulfur atoms into the C-6 and C-8 positions of the octanoyl moiety bound to the lipoyl domains of lipoate-dependent enzymes, thereby converting the octanoylated domains into lipoylated derivatives. This is Lipoyl synthase, mitochondrial (LIP1) from Ricinus communis (Castor bean).